The sequence spans 173 residues: CASP-like protein 2D1 (173 aa).

The Cytoplasmic segment spans residues 1–9; that stretch reads MAPLLKLLD. The chain crosses the membrane as a helical span at residues 10–29; it reads SSLRVSVIPLSAATIWLTVT. At 30 to 50 the chain is on the extracellular side; it reads NHQDNSSYGNLKYSNIMGLKY. Asn-34 is a glycosylation site (N-linked (GlcNAc...) asparagine). A helical transmembrane segment spans residues 51-71; it reads MVCISAICASYAFVAAVSIWI. Over 72-86 the chain is Cytoplasmic; that stretch reads KCLVNKVWLFFVSDQ. The chain crosses the membrane as a helical span at residues 87–107; the sequence is IIAYLMVTSVAAAMEILYIAY. At 108-131 the chain is on the extracellular side; it reads NGDQKVTWSEACTSYGKFCNGMKT. A helical transmembrane segment spans residues 132–152; it reads ALILHALTLCFFIVLAVISAY. The Cytoplasmic portion of the chain corresponds to 153 to 173; the sequence is RAFSMYQPPVSSKETVEGDAT.

Belongs to the Casparian strip membrane proteins (CASP) family. Homodimer and heterodimers.

The protein localises to the cell membrane. The polypeptide is CASP-like protein 2D1 (Ricinus communis (Castor bean)).